The chain runs to 367 residues: MTHRTKTRPVKVGNLTIGGNNELIIQSMTTTKTHDVEATVAEIKRLEEAGCQVVRVAVPDERAANAIADIKKQINIPLVADIHFDYRLALKAIEGGIDKVRINPGNIGRRHKVEAVVNAAKERGIPIRIGVNAGSLERHILEKYGYPTADGMVESALHHIKILEDLDFHDIIVSMKASDVNLAIEAYEKAARAFDYPLHLGITESGTLFAGTVKSAAGLGAILNKGIGNTLRISLSADPVEEVKVARELLKSFGLASNAATLISCPTCGRIEIDLISIANEVEEYISTLQVPIKVAVLGCAVNGPGEAREADIGIAGARGEGLLFRKGQVVRKVPEEIMVEELKKEIDVIAAEMAAEREKEKETQEQ.

[4Fe-4S] cluster contacts are provided by Cys265, Cys268, Cys300, and Glu307.

Belongs to the IspG family. The cofactor is [4Fe-4S] cluster.

The enzyme catalyses (2E)-4-hydroxy-3-methylbut-2-enyl diphosphate + oxidized [flavodoxin] + H2O + 2 H(+) = 2-C-methyl-D-erythritol 2,4-cyclic diphosphate + reduced [flavodoxin]. It participates in isoprenoid biosynthesis; isopentenyl diphosphate biosynthesis via DXP pathway; isopentenyl diphosphate from 1-deoxy-D-xylulose 5-phosphate: step 5/6. In terms of biological role, converts 2C-methyl-D-erythritol 2,4-cyclodiphosphate (ME-2,4cPP) into 1-hydroxy-2-methyl-2-(E)-butenyl 4-diphosphate. In Bacillus anthracis, this protein is 4-hydroxy-3-methylbut-2-en-1-yl diphosphate synthase (flavodoxin).